Here is a 90-residue protein sequence, read N- to C-terminus: Large ribosomal subunit protein bL27 (90 aa).

Residues methionine 1 to leucine 21 are disordered.

The protein belongs to the bacterial ribosomal protein bL27 family.

The polypeptide is Large ribosomal subunit protein bL27 (Nitrobacter winogradskyi (strain ATCC 25391 / DSM 10237 / CIP 104748 / NCIMB 11846 / Nb-255)).